The primary structure comprises 74 residues: Cytochrome c oxidase copper chaperone 1 (74 aa).

Residues 1-30 (MTDQPAQNGLIPPPTSEPSKAAASAETKPK) are disordered. Positions 34 and 35 each coordinate Cu cation. Residues 34 to 74 (CCACPDTKKLRDECIVEHGESACTKWIEAHKICLRAEGFNV) form the CHCH domain. 2 short sequence motifs (cx9C motif) span residues 37 to 47 (CPDTKKLRDEC) and 56 to 66 (CTKWIEAHKIC). Disulfide bonds link Cys37–Cys66 and Cys47–Cys56.

Belongs to the COX17 family.

It localises to the mitochondrion intermembrane space. Its function is as follows. Copper chaperone for cytochrome c oxidase (COX). Binds 2 copper ions and delivers them to the Cu(A) site of COX. Can complement the yeast mutant cox17. The sequence is that of Cytochrome c oxidase copper chaperone 1 (COX17-1) from Arabidopsis thaliana (Mouse-ear cress).